We begin with the raw amino-acid sequence, 446 residues long: Serum factor response D (446 aa).

In terms of domain architecture, MADS-box spans 1–61; sequence MGRKKIKIQR…PNAKEKYFQY (61 aa). 3 disordered regions span residues 95–195, 210–296, and 319–432; these read KKEK…FNSS, TQEN…CQQV, and CSSP…SNLN. Positions 112–121 are enriched in basic and acidic residues; that stretch reads SHSEEEDHKS. The segment covering 133–142 has biased composition (basic residues); that stretch reads HHNHHHHHHQ. 2 stretches are compositionally biased toward low complexity: residues 143-195 and 216-282; these read YNNN…FNSS and HYNN…NNNN. A compositionally biased stretch (polar residues) spans 322-355; that stretch reads PEDTSPMTSPRTPPFSSTNTNTLQTSPNSQQKSK. The span at 365–432 shows a compositional bias: low complexity; that stretch reads NNNQNNNNQN…SPTSSSSNLN (68 aa).

The protein localises to the nucleus. The polypeptide is Serum factor response D (srfD) (Dictyostelium discoideum (Social amoeba)).